The chain runs to 531 residues: Dimethylnonatriene synthase (531 aa).

The helical transmembrane segment at 6 to 26 (TMSVAMALAAAIFVVLCSVVA) threads the bilayer. Cys-464 serves as a coordination point for heme.

Belongs to the cytochrome P450 family. It depends on heme as a cofactor.

The protein resides in the membrane. It carries out the reaction (6E,10E)-geranyllinalool + reduced [NADPH--hemoprotein reductase] + O2 = (3E,7E)-4,8,12-trimethyltrideca 1,3,7,11-tetraene + but-3-en-2-one + oxidized [NADPH--hemoprotein reductase] + 2 H2O + H(+). The enzyme catalyses (3S,6E)-nerolidol + reduced [NADPH--hemoprotein reductase] + O2 = (3E)-4,8-dimethylnona-1,3,7-triene + but-3-en-2-one + oxidized [NADPH--hemoprotein reductase] + 2 H2O + H(+). Its pathway is secondary metabolite biosynthesis; terpenoid biosynthesis. Functionally, involved in the biosynthesis of homoterpenes, attractants of herbivores parasitoids and predators (e.g. predatory mites and parasitoid wasps). Component of the volatile terpenes biosynthesis pathways. Converts mainly nerolidol to dimethylnonatriene (DMNT) and, to a lower extent, geranyllinalool to trimethyltridecatetraene (TMTT). The sequence is that of Dimethylnonatriene synthase from Zea mays (Maize).